The chain runs to 402 residues: Deacetylase Oant_2987 (402 aa).

Zn(2+)-binding residues include histidine 70, histidine 72, lysine 168, histidine 201, histidine 224, and aspartate 284. Lysine 168 carries the N6-carboxylysine modification.

It belongs to the metallo-dependent hydrolases superfamily. Atu3266/EF_0837 deacetylase family. The cofactor is Zn(2+).

Functionally, esterase that catalyzes the deacetylation of acetyl-(R)-mandelate (in vitro). Can also hydrolyze acetyl glycolate, but with lower efficiency. Has very low N-acetyl-D-amino acid deacetylase activity with N-acetyl-D-serine and N-acetyl-D-threonine (in vitro). Theoretical substrate docking studies suggest that other N-acetylated amino acids may optimally occupy the active site and may in fact be the physiological substrates. The protein is Deacetylase Oant_2987 of Brucella anthropi (strain ATCC 49188 / DSM 6882 / CCUG 24695 / JCM 21032 / LMG 3331 / NBRC 15819 / NCTC 12168 / Alc 37) (Ochrobactrum anthropi).